Consider the following 1072-residue polypeptide: MPKRLDINTILVIGSGPIVIGQAAEFDYSGTQACQSLREEGYKVILVNSNPATIMTDTATADKVYIEPLTLEFVSRIIRKERPDAILPTLGGQTGLNMAVELAKSGILEECGVEILGTKLSAIEQAEDRDLFRTLMQELNEPIPSSTIIHTLEEAHEFVKEIGYPVIVRPAFTMGGTGGGICSNEEELIEIVSGGLKHSPVTQCLLEKSIAGCKEIEYEVMRDSNDNAIVVCNMENIDPVGVHTGDSIVVAPSQTLSDREYQMLRNTSLRIIRALGIEGGCNVQLALDPHSFQYYVIEVNPRVSRSSALASKATGYPIAKLAAKIAVGLTLDEIINPVTQKTYACFEPALDYVVSKIPRWPFDKFESANRTLGTQMKATGEVMSIGRNLEQSLLKAVRSLELGVYHLELEHLKELDKETMKKRIIKADDERLFIVAEAIRQGVTKEEINEWCEMDFFFLQKVENIVNMEREVKANVGNMEVLQTAKEMGFSDHYVAAAWNKTEREIYDMRKESNITPVYKMVDTCAAEFESATPYYYSTYGDENESVRTDRKSVVVLGSGPIRIGQGVEFDYATVHSVWAIKEAGYEAIIVNNNPETVSTDFSISDKLYFEPLTIEDVMHIIDLEKPEGVIVQFGGQTAINLAAKLEEHGVKILGTSLEDLDRAEDRDKFEAALTQLGIPQPVGKTATTVEQAVAIAEEIGYPVLVRPSYVLGGRAMEIVYRQEELLHYMKNAVKVHAEHPVLIDRYMVGKEIEVDAISDGENVFIPGIMEHIERAGVHSGDSIGVYPPQSLSEKLKEQIIEHTIALGKGLNIVGLLNIQFVVFKDQVYVIEVNPRASRTVPFLSKITGVPMANVATKVILGQDLVEQGYGTGYHPEEKEVYVKAPVFSFAKLRSVDTTLGPEMKSTGEVMGKDLTLEKALYKGLVASGINIPTHGSVIITVADKDKEEAMEIAKRFHEIGYNLLATAGTAQSLAEQNIPVQVVNKIDSEDYNLLDIIRQGKAQFVINTLTKGKQPARDGFRIRRESVENGVACLTSLDTTRAILRVLESMTFSAHSMKEITQTKRHEVVHA.

The interval 1 to 401 is carboxyphosphate synthetic domain; the sequence is MPKRLDINTI…SLLKAVRSLE (401 aa). ATP contacts are provided by Arg129, Arg169, Gly175, Gly176, Lys208, Ile210, Glu215, Gly241, Val242, His243, Gln284, and Glu298. The region spanning 133-327 is the ATP-grasp 1 domain; sequence RTLMQELNEP…IAKLAAKIAV (195 aa). Residues Gln284, Glu298, and Asn300 each contribute to the Mg(2+) site. Gln284, Glu298, and Asn300 together coordinate Mn(2+). Residues 402–546 are oligomerization domain; the sequence is LGVYHLELEH…YSTYGDENES (145 aa). The interval 547 to 929 is carbamoyl phosphate synthetic domain; that stretch reads VRTDRKSVVV…ALYKGLVASG (383 aa). An ATP-grasp 2 domain is found at 671–861; the sequence is EAALTQLGIP…MANVATKVIL (191 aa). ATP-binding residues include Arg707, Arg746, Glu752, Gly777, Val778, His779, Ser780, Gln820, and Glu832. Mg(2+) is bound by residues Gln820, Glu832, and Asn834. Mn(2+) is bound by residues Gln820, Glu832, and Asn834. One can recognise an MGS-like domain in the interval 930–1072; sequence INIPTHGSVI…QTKRHEVVHA (143 aa). The interval 930 to 1072 is allosteric domain; that stretch reads INIPTHGSVI…QTKRHEVVHA (143 aa).

The protein belongs to the CarB family. In terms of assembly, composed of two chains; the small (or glutamine) chain promotes the hydrolysis of glutamine to ammonia, which is used by the large (or ammonia) chain to synthesize carbamoyl phosphate. Tetramer of heterodimers (alpha,beta)4. Mg(2+) serves as cofactor. It depends on Mn(2+) as a cofactor.

It catalyses the reaction hydrogencarbonate + L-glutamine + 2 ATP + H2O = carbamoyl phosphate + L-glutamate + 2 ADP + phosphate + 2 H(+). The enzyme catalyses hydrogencarbonate + NH4(+) + 2 ATP = carbamoyl phosphate + 2 ADP + phosphate + 2 H(+). Its pathway is amino-acid biosynthesis; L-arginine biosynthesis; carbamoyl phosphate from bicarbonate: step 1/1. It participates in pyrimidine metabolism; UMP biosynthesis via de novo pathway; (S)-dihydroorotate from bicarbonate: step 1/3. Large subunit of the glutamine-dependent carbamoyl phosphate synthetase (CPSase). CPSase catalyzes the formation of carbamoyl phosphate from the ammonia moiety of glutamine, carbonate, and phosphate donated by ATP, constituting the first step of 2 biosynthetic pathways, one leading to arginine and/or urea and the other to pyrimidine nucleotides. The large subunit (synthetase) binds the substrates ammonia (free or transferred from glutamine from the small subunit), hydrogencarbonate and ATP and carries out an ATP-coupled ligase reaction, activating hydrogencarbonate by forming carboxy phosphate which reacts with ammonia to form carbamoyl phosphate. The sequence is that of Carbamoyl phosphate synthase large chain from Bacillus cereus (strain G9842).